A 466-amino-acid chain; its full sequence is Adenylosuccinate lyase (466 aa).

Substrate is bound by residues 21 to 22 (RY), 97 to 99 (NHD), and 130 to 131 (TS). Histidine 180 (proton donor/acceptor) is an active-site residue. Glutamine 259 lines the substrate pocket. Serine 307 serves as the catalytic Proton donor/acceptor. 3 residues coordinate substrate: arginine 347, serine 352, and arginine 356.

Belongs to the lyase 1 family. Adenylosuccinate lyase subfamily. Homotetramer. Residues from neighboring subunits contribute catalytic and substrate-binding residues to each active site.

The catalysed reaction is N(6)-(1,2-dicarboxyethyl)-AMP = fumarate + AMP. The enzyme catalyses (2S)-2-[5-amino-1-(5-phospho-beta-D-ribosyl)imidazole-4-carboxamido]succinate = 5-amino-1-(5-phospho-beta-D-ribosyl)imidazole-4-carboxamide + fumarate. It participates in purine metabolism; AMP biosynthesis via de novo pathway; AMP from IMP: step 2/2. It functions in the pathway purine metabolism; IMP biosynthesis via de novo pathway; 5-amino-1-(5-phospho-D-ribosyl)imidazole-4-carboxamide from 5-amino-1-(5-phospho-D-ribosyl)imidazole-4-carboxylate: step 2/2. This chain is Adenylosuccinate lyase (purB), found in Dictyostelium discoideum (Social amoeba).